Consider the following 364-residue polypeptide: Chaperone protein DnaJ 1 (364 aa).

One can recognise a J domain in the interval 7–71; that stretch reads DYYEILGVNR…ERRSEYDAIL (65 aa). The CR-type zinc-finger motif lies at 124-200; sequence GCEKEIIYSR…CYGRGRVSAQ (77 aa). The Zn(2+) site is built by Cys137, Cys140, Cys154, Cys157, Cys174, Cys177, Cys188, and Cys191. CXXCXGXG motif repeat units lie at residues 137 to 144, 154 to 161, 174 to 181, and 188 to 195; these read CPVCEGMG, CHACNGEG, CSVCKGKG, and CPTCYGRG.

The protein belongs to the DnaJ family. Homodimer. The cofactor is Zn(2+).

The protein localises to the cytoplasm. In terms of biological role, participates actively in the response to hyperosmotic and heat shock by preventing the aggregation of stress-denatured proteins and by disaggregating proteins, also in an autonomous, DnaK-independent fashion. Unfolded proteins bind initially to DnaJ; upon interaction with the DnaJ-bound protein, DnaK hydrolyzes its bound ATP, resulting in the formation of a stable complex. GrpE releases ADP from DnaK; ATP binding to DnaK triggers the release of the substrate protein, thus completing the reaction cycle. Several rounds of ATP-dependent interactions between DnaJ, DnaK and GrpE are required for fully efficient folding. Also involved, together with DnaK and GrpE, in the DNA replication of plasmids through activation of initiation proteins. This chain is Chaperone protein DnaJ 1, found in Aquifex aeolicus (strain VF5).